We begin with the raw amino-acid sequence, 371 residues long: Barbiturase 2 (371 aa).

The interval 1 to 104 (MTRPIEVRKV…TIFAYAPEGR (104 aa)) is RU A. Residues arginine 53 and 83-84 (SG) each bind substrate. The tract at residues 112–247 (RVTVGYAMSE…AQIVVVGNAR (136 aa)) is RU B. Lysine 162 is a catalytic residue. Substrate-binding positions include asparagine 194 and 230-231 (SS). Residue serine 230 is the Nucleophile of the active site. An RU C region spans residues 253–371 (FRVGHSIMKD…PVIAIVDLEA (119 aa)). Residue glutamate 303 coordinates Mg(2+). Substrate-binding positions include lysine 330 and 349–350 (SV). The Mg(2+) site is built by alanine 352, glutamine 355, glycine 356, proline 357, and glycine 360.

Belongs to the cyclic amide hydrolase (CyAH) family. Homotetramer.

It carries out the reaction barbiturate + H2O = 3-oxo-3-ureidopropanoate. It participates in pyrimidine metabolism; uracil degradation via oxidative pathway; malonate and urea from uracil: step 2/3. In terms of biological role, responsible for the hydrolysis of barbituric acid (2,4,6-trihydroxy-1,3-pyrimidine), an intermediate in the oxidative catabolism of pyrimidines. Catalyzes the hydrolytic opening of the pyrimidine ring of barbituric acid to yield ureidomalonic acid. Can also use cyanuric acid as a substrate, albeit with lower efficiency. This chain is Barbiturase 2, found in Nocardioides sp. (strain ATCC BAA-499 / JS614).